Here is an 872-residue protein sequence, read N- to C-terminus: F-box protein pof6 (872 aa).

The 46-residue stretch at 30–75 folds into the F-box domain; that stretch reads FGCLTINIYLKIFTLISTPDLCNCRLVCRKFQQLCDYNSIYVKKLL. The interval 101-122 is disordered; sequence MSSNTSKGFHLQSSDKKYADSD. The segment covering 113-122 has biased composition (basic and acidic residues); that stretch reads SSDKKYADSD.

In terms of assembly, interacts with skp1. Forms a complex with pof6 and skp1.

It is found in the cytoplasm. It localises to the nucleus. In terms of biological role, together with skp1, essential for septum processing and cell separation. This Schizosaccharomyces pombe (strain 972 / ATCC 24843) (Fission yeast) protein is F-box protein pof6 (pof6).